The primary structure comprises 273 residues: UPF0380 protein YafZ (273 aa).

The protein belongs to the UPF0380 family.

This is UPF0380 protein YafZ (yafZ) from Escherichia coli (strain K12).